A 237-amino-acid polypeptide reads, in one-letter code: Phosphoribosylaminoimidazole-succinocarboxamide synthase (237 aa).

Belongs to the SAICAR synthetase family.

It catalyses the reaction 5-amino-1-(5-phospho-D-ribosyl)imidazole-4-carboxylate + L-aspartate + ATP = (2S)-2-[5-amino-1-(5-phospho-beta-D-ribosyl)imidazole-4-carboxamido]succinate + ADP + phosphate + 2 H(+). It functions in the pathway purine metabolism; IMP biosynthesis via de novo pathway; 5-amino-1-(5-phospho-D-ribosyl)imidazole-4-carboxamide from 5-amino-1-(5-phospho-D-ribosyl)imidazole-4-carboxylate: step 1/2. The polypeptide is Phosphoribosylaminoimidazole-succinocarboxamide synthase (Salmonella arizonae (strain ATCC BAA-731 / CDC346-86 / RSK2980)).